Reading from the N-terminus, the 1350-residue chain is ABC transporter C family member 13 (1350 aa).

One can recognise an ABC transmembrane type-1 1 domain in the interval Asn-107–Gly-390. The next 4 helical transmembrane spans lie at Ile-111–Phe-131, Thr-143–Leu-163, Ile-215–Gln-235, and Leu-240–Ile-260. The segment at Glu-462 to Asn-481 is disordered. Over residues Thr-470–Asn-481 the composition is skewed to low complexity. The 221-residue stretch at Thr-473–Lys-693 folds into the ABC transporter 1 domain. Gly-505–Thr-512 contributes to the ATP binding site. The ABC transmembrane type-1 2 domain occupies Lys-774 to Ser-1061. 6 helical membrane-spanning segments follow: residues Gly-776–Phe-796, Asp-816–Ile-836, Ile-887–Phe-907, Ile-909–Val-929, Ile-1003–Leu-1023, and Gly-1029–Val-1049. The region spanning Ile-1103–Lys-1337 is the ABC transporter 2 domain. ATP is bound at residue Gly-1137–Ser-1144.

The protein belongs to the ABC transporter superfamily. ABCC family. Conjugate transporter (TC 3.A.1.208) subfamily.

The protein localises to the membrane. The protein is ABC transporter C family member 13 (abcC13) of Dictyostelium discoideum (Social amoeba).